A 388-amino-acid chain; its full sequence is Adenosine deaminase-like protein (388 aa).

Positions 1 to 13 (MPNNSKHKKKQQR) are enriched in basic residues. Positions 1 to 34 (MPNNSKHKKKQQRRQQEAQKKSRAKQIETDKKND) are disordered. A compositionally biased stretch (basic and acidic residues) spans 14–34 (RQQEAQKKSRAKQIETDKKND). Zn(2+) is bound by residues H65 and H67. N(6)-methyl-AMP contacts are provided by residues H67, H114, 146–149 (TSPK), D186, and G218. H245 serves as a coordination point for Zn(2+). Residues E248, D326, and D327 each contribute to the N(6)-methyl-AMP site. E248 functions as the Proton donor in the catalytic mechanism. Residue D326 participates in Zn(2+) binding.

Belongs to the metallo-dependent hydrolases superfamily. Adenosine and AMP deaminases family. In terms of assembly, monomer. Requires Zn(2+) as cofactor.

It catalyses the reaction N(6)-methyl-AMP + H2O + H(+) = IMP + methylamine. Catalyzes the hydrolysis of the free cytosolic methylated adenosine nucleotide N(6)-methyl-AMP (N6-mAMP) to produce inositol monophosphate (IMP) and methylamine. Is required for the catabolism of cytosolic N6-mAMP, which is derived from the degradation of mRNA containing N6-methylated adenine (m6A). This chain is Adenosine deaminase-like protein, found in Caenorhabditis elegans.